The chain runs to 451 residues: Probable V-type proton ATPase subunit H 1 (451 aa).

It belongs to the V-ATPase H subunit family. As to quaternary structure, V-ATPase is a heteromultimeric enzyme made up of two complexes: the ATP-hydrolytic V1 complex and the proton translocation V0 complex. The V1 complex consists of three catalytic AB heterodimers that form a heterohexamer, three peripheral stalks each consisting of EG heterodimers, one central rotor including subunits D and F, and the regulatory subunits C and H. The proton translocation complex V0 consists of the proton transport subunit a, a ring of proteolipid subunits c9c'', rotary subunit d, subunits e and f, and the accessory subunits vah-19/Ac45 and vah-20/PRR.

Functionally, subunit of the V1 complex of vacuolar(H+)-ATPase (V-ATPase), a multisubunit enzyme composed of a peripheral complex (V1) that hydrolyzes ATP and a membrane integral complex (V0) that translocates protons. V-ATPase is responsible for acidifying and maintaining the pH of intracellular compartments and in some cell types, is targeted to the plasma membrane, where it is responsible for acidifying the extracellular environment. Subunit H is essential for V-ATPase activity, but not for the assembly of the complex. The polypeptide is Probable V-type proton ATPase subunit H 1 (Caenorhabditis elegans).